We begin with the raw amino-acid sequence, 143 residues long: Deoxyuridine 5'-triphosphate nucleotidohydrolase (143 aa).

Substrate contacts are provided by residues R63 to G65, N76, T80 to D82, and K90.

The protein belongs to the dUTPase family. Mg(2+) is required as a cofactor.

It carries out the reaction dUTP + H2O = dUMP + diphosphate + H(+). It participates in pyrimidine metabolism; dUMP biosynthesis; dUMP from dCTP (dUTP route): step 2/2. In terms of biological role, this enzyme is involved in nucleotide metabolism: it produces dUMP, the immediate precursor of thymidine nucleotides and it decreases the intracellular concentration of dUTP so that uracil cannot be incorporated into DNA. The sequence is that of Deoxyuridine 5'-triphosphate nucleotidohydrolase from Finegoldia magna (strain ATCC 29328 / DSM 20472 / WAL 2508) (Peptostreptococcus magnus).